Reading from the N-terminus, the 156-residue chain is MARKGHIGKRDVLPDPVYNSKVVTKLINNIMKDGKKGVAQKICYGAFDIIEQKTSKEPMEVFEEAMNNIMPLLEVKARRIGGATYQVPIEVRPERRQTLGIRWLLVASRKRGEKYMRERLAAELMDAANNTGTAVKKREDTHKMAEANKAFAHYRY.

This sequence belongs to the universal ribosomal protein uS7 family. Part of the 30S ribosomal subunit. Contacts proteins S9 and S11.

One of the primary rRNA binding proteins, it binds directly to 16S rRNA where it nucleates assembly of the head domain of the 30S subunit. Is located at the subunit interface close to the decoding center, probably blocks exit of the E-site tRNA. The chain is Small ribosomal subunit protein uS7 from Clostridium kluyveri (strain NBRC 12016).